The primary structure comprises 542 residues: Probable E3 ubiquitin-protein ligase ARI11 (542 aa).

Residues 1 to 25 form a disordered region; that stretch reads MSSSDRDIIDIESGEEDLYSDGGND. The span at 10-19 shows a compositional bias: acidic residues; the sequence is DIESGEEDLY. A TRIAD supradomain region spans residues 135-342; that stretch reads VDIQCGICFE…SDHKACNAFK (208 aa). Residues Cys139, Cys142, Cys156, His158, Cys161, Cys164, Cys184, Cys189, Cys228, Cys233, Cys251, Cys253, Cys258, Cys261, His266, Cys271, Cys298, and Cys301 each contribute to the Zn(2+) site. The RING-type 1 zinc finger occupies 139-189; that stretch reads CGICFESYTRKEIARVSCGHPYCKTCWTGYITTKIEDGPGCLRVKCPEPSC. The segment at 208–271 adopts an IBR-type zinc-finger fold; that stretch reads DKYYRYFLRS…CEDAHSPVDC (64 aa). The RING-type 2; atypical zinc-finger motif lies at 298–328; the sequence is CPKCKRPIEKNTGCNHMSCSAPCRHYFCWAC. Residue Cys311 is part of the active site. Cys316, Cys320, Cys325, Cys328, His335, and Cys338 together coordinate Zn(2+).

It belongs to the RBR family. Ariadne subfamily. The cofactor is Zn(2+).

The catalysed reaction is [E2 ubiquitin-conjugating enzyme]-S-ubiquitinyl-L-cysteine + [acceptor protein]-L-lysine = [E2 ubiquitin-conjugating enzyme]-L-cysteine + [acceptor protein]-N(6)-ubiquitinyl-L-lysine.. It participates in protein modification; protein ubiquitination. Functionally, might act as an E3 ubiquitin-protein ligase, or as part of E3 complex, which accepts ubiquitin from specific E2 ubiquitin-conjugating enzymes and then transfers it to substrates. The protein is Probable E3 ubiquitin-protein ligase ARI11 (ARI11) of Arabidopsis thaliana (Mouse-ear cress).